The chain runs to 550 residues: Hydroxylamine reductase (550 aa).

[2Fe-2S] cluster-binding residues include Cys3, Cys6, Cys18, and Cys25. 8 residues coordinate hybrid [4Fe-2O-2S] cluster: His249, Glu273, Cys317, Cys405, Cys433, Cys458, Glu492, and Lys494. Cys405 carries the post-translational modification Cysteine persulfide.

This sequence belongs to the HCP family. Requires [2Fe-2S] cluster as cofactor. Hybrid [4Fe-2O-2S] cluster is required as a cofactor.

It localises to the cytoplasm. The enzyme catalyses A + NH4(+) + H2O = hydroxylamine + AH2 + H(+). Functionally, catalyzes the reduction of hydroxylamine to form NH(3) and H(2)O. In Yersinia pseudotuberculosis serotype IB (strain PB1/+), this protein is Hydroxylamine reductase.